Here is a 221-residue protein sequence, read N- to C-terminus: ATP-dependent dethiobiotin synthetase BioD (221 aa).

11–16 contacts ATP; the sequence is DIGKTL. Mg(2+) is bound at residue T15. Residue K35 is part of the active site. T39 is a substrate binding site. ATP-binding positions include D44 and 103–106; that span reads EGAG. Mg(2+) is bound by residues D44 and E103.

It belongs to the dethiobiotin synthetase family. Homodimer. The cofactor is Mg(2+).

It is found in the cytoplasm. The enzyme catalyses (7R,8S)-7,8-diammoniononanoate + CO2 + ATP = (4R,5S)-dethiobiotin + ADP + phosphate + 3 H(+). It participates in cofactor biosynthesis; biotin biosynthesis; biotin from 7,8-diaminononanoate: step 1/2. In terms of biological role, catalyzes a mechanistically unusual reaction, the ATP-dependent insertion of CO2 between the N7 and N8 nitrogen atoms of 7,8-diaminopelargonic acid (DAPA, also called 7,8-diammoniononanoate) to form a ureido ring. In Leptospira borgpetersenii serovar Hardjo-bovis (strain L550), this protein is ATP-dependent dethiobiotin synthetase BioD.